A 94-amino-acid polypeptide reads, in one-letter code: Large ribosomal subunit protein bL27 (94 aa).

Positions methionine 1–phenylalanine 9 are excised as a propeptide.

Belongs to the bacterial ribosomal protein bL27 family. The N-terminus is cleaved by ribosomal processing cysteine protease Prp.

In Halalkalibacterium halodurans (strain ATCC BAA-125 / DSM 18197 / FERM 7344 / JCM 9153 / C-125) (Bacillus halodurans), this protein is Large ribosomal subunit protein bL27.